The following is a 480-amino-acid chain: Transposase for transposon Tn552 (480 aa).

The segment at residues Leu36–Lys55 is a DNA-binding region (H-T-H motif). The region spanning Glu155–His341 is the Integrase catalytic domain. The interval Arg438–Asp480 is disordered. A compositionally biased stretch (basic residues) spans Asn470–Asp480.

The polypeptide is Transposase for transposon Tn552 (Staphylococcus aureus).